The primary structure comprises 235 residues: Phosphoribosylaminoimidazole-succinocarboxamide synthase (235 aa).

The protein belongs to the SAICAR synthetase family.

The enzyme catalyses 5-amino-1-(5-phospho-D-ribosyl)imidazole-4-carboxylate + L-aspartate + ATP = (2S)-2-[5-amino-1-(5-phospho-beta-D-ribosyl)imidazole-4-carboxamido]succinate + ADP + phosphate + 2 H(+). Its pathway is purine metabolism; IMP biosynthesis via de novo pathway; 5-amino-1-(5-phospho-D-ribosyl)imidazole-4-carboxamide from 5-amino-1-(5-phospho-D-ribosyl)imidazole-4-carboxylate: step 1/2. The sequence is that of Phosphoribosylaminoimidazole-succinocarboxamide synthase from Streptococcus pneumoniae serotype 19F (strain G54).